Consider the following 88-residue polypeptide: Adenylosuccinate lyase (88 aa).

N(6)-(1,2-dicarboxyethyl)-AMP contacts are provided by residues 4-5 (RY) and 67-69 (KHD).

The protein belongs to the lyase 1 family. Adenylosuccinate lyase subfamily. As to quaternary structure, homotetramer and homodimer. Residues from neighboring subunits contribute catalytic and substrate-binding residues to each active site.

It catalyses the reaction N(6)-(1,2-dicarboxyethyl)-AMP = fumarate + AMP. The enzyme catalyses (2S)-2-[5-amino-1-(5-phospho-beta-D-ribosyl)imidazole-4-carboxamido]succinate = 5-amino-1-(5-phospho-beta-D-ribosyl)imidazole-4-carboxamide + fumarate. It functions in the pathway purine metabolism; AMP biosynthesis via de novo pathway; AMP from IMP: step 2/2. It participates in purine metabolism; IMP biosynthesis via de novo pathway; 5-amino-1-(5-phospho-D-ribosyl)imidazole-4-carboxamide from 5-amino-1-(5-phospho-D-ribosyl)imidazole-4-carboxylate: step 2/2. Functionally, catalyzes two reactions in de novo purine nucleotide biosynthesis. Catalyzes the breakdown of 5-aminoimidazole- (N-succinylocarboxamide) ribotide (SAICAR or 2-[5-amino-1-(5-phospho-beta-D-ribosyl)imidazole-4-carboxamido]succinate) to 5-aminoimidazole-4-carboxamide ribotide (AICAR or 5-amino-1-(5-phospho-beta-D-ribosyl)imidazole-4-carboxamide) and fumarate, and of adenylosuccinate (ADS or N(6)-(1,2-dicarboxyethyl)-AMP) to adenosine monophosphate (AMP) and fumarate. This is Adenylosuccinate lyase (purB) from Spiroplasma citri.